The following is a 23-amino-acid chain: Pseudin-4 (23 aa).

In terms of tissue distribution, expressed by the skin glands.

It localises to the secreted. Possesses antifungal activity against C.albicans and is also active against E.coli and S.aureus. This Pseudis paradoxa (Paradoxical frog) protein is Pseudin-4.